A 713-amino-acid polypeptide reads, in one-letter code: Polyribonucleotide nucleotidyltransferase (713 aa).

Residues Asp487 and Asp493 each coordinate Mg(2+). The KH domain maps to 554-613; sequence PRIEVMNIPVDKIREVIGSGGKVIREIVEKTGAKINIEDDGTVKIASASGKEIEAARKWI. Positions 623 to 691 constitute an S1 motif domain; sequence GQIYEGTVVK…ERGKVRLSMK (69 aa).

It belongs to the polyribonucleotide nucleotidyltransferase family. The cofactor is Mg(2+).

The protein resides in the cytoplasm. It carries out the reaction RNA(n+1) + phosphate = RNA(n) + a ribonucleoside 5'-diphosphate. Functionally, involved in mRNA degradation. Catalyzes the phosphorolysis of single-stranded polyribonucleotides processively in the 3'- to 5'-direction. The protein is Polyribonucleotide nucleotidyltransferase of Agrobacterium fabrum (strain C58 / ATCC 33970) (Agrobacterium tumefaciens (strain C58)).